The sequence spans 299 residues: GTPase Era (299 aa).

Residues 5–175 enclose the Era-type G domain; that stretch reads RSGFVCFVGR…TDVLAGKLPP (171 aa). The G1 stretch occupies residues 13 to 20; it reads GRPNTGKS. Position 13-20 (13-20) interacts with GTP; sequence GRPNTGKS. The G2 stretch occupies residues 39 to 43; it reads QTTRH. The G3 stretch occupies residues 60-63; that stretch reads DTPG. GTP is bound by residues 60–64 and 124–127; these read DTPGL and TKID. The interval 124–127 is G4; it reads TKID. Residues 154–156 form a G5 region; it reads VSA. One can recognise a KH type-2 domain in the interval 206-285; the sequence is VRDELPHSLA…YLDLRVKIAK (80 aa).

Belongs to the TRAFAC class TrmE-Era-EngA-EngB-Septin-like GTPase superfamily. Era GTPase family. In terms of assembly, monomer.

Its subcellular location is the cell envelope. The protein localises to the secreted. The protein resides in the cell wall. In terms of biological role, exhibits GTPase activity. Binds RNA but is probably not involved in ribosome assembly in mycobacteria. In Mycobacterium sp. (strain JLS), this protein is GTPase Era.